A 361-amino-acid polypeptide reads, in one-letter code: Phosphate acyltransferase (361 aa).

The tract at residues 340–361 is disordered; it reads VPADGAATEQGPTPRRIAPPRT.

The protein belongs to the PlsX family. As to quaternary structure, homodimer. Probably interacts with PlsY.

Its subcellular location is the cytoplasm. The enzyme catalyses a fatty acyl-[ACP] + phosphate = an acyl phosphate + holo-[ACP]. It functions in the pathway lipid metabolism; phospholipid metabolism. Catalyzes the reversible formation of acyl-phosphate (acyl-PO(4)) from acyl-[acyl-carrier-protein] (acyl-ACP). This enzyme utilizes acyl-ACP as fatty acyl donor, but not acyl-CoA. The chain is Phosphate acyltransferase from Anaeromyxobacter dehalogenans (strain 2CP-1 / ATCC BAA-258).